We begin with the raw amino-acid sequence, 492 residues long: Solute carrier family 2, facilitated glucose transporter member 1 (492 aa).

Met-1 is modified (N-acetylmethionine). Topologically, residues 1–11 are cytoplasmic; sequence MEPSSKKLTGR. The chain crosses the membrane as a helical span at residues 12-33; that stretch reads LMLAVGGAVLGSLQFGYNTGVI. Residues 34–66 are Extracellular-facing; it reads NAPQKVIEEFYNQTWVHRYGESILPTTLTTLWS. N-linked (GlcNAc...) asparagine glycosylation is present at Asn-45. A helical transmembrane segment spans residues 67–87; that stretch reads LSVAIFSVGGMIGSFSVGLFV. Residues 88 to 90 are Cytoplasmic-facing; it reads NRF. A helical transmembrane segment spans residues 91–112; it reads GRRNSMLMMNLLAFVSAVLMGF. Residues 113–120 are Extracellular-facing; that stretch reads SKLGKSFE. Residues 121 to 144 form a helical membrane-spanning segment; it reads MLILGRFIIGVYCGLTTGFVPMYV. Thr-137 contributes to the cytochalasin B binding site. Residues 145 to 155 are Cytoplasmic-facing; sequence GEVSPTALRGA. A helical membrane pass occupies residues 156–176; sequence LGTLHQLGIVVGILIAQVFGL. Over 177-185 the chain is Extracellular; the sequence is DSIMGNKDL. Residues 186–206 traverse the membrane as a helical segment; it reads WPLLLSIIFIPALLQCIVLPF. The Cytoplasmic portion of the chain corresponds to 207-271; it reads CPESPRFLLI…LFRSPAYRQP (65 aa). Ser-226 carries the phosphoserine; by PKC/PRKCB modification. The helical transmembrane segment at 272–293 threads the bilayer; it reads ILIAVVLQLSQQLSGINAVFYY. Gln-282 is a binding site for cytochalasin B. D-glucose contacts are provided by residues 282–283 and Asn-288; that span reads QQ. At 294-306 the chain is on the extracellular side; it reads STSIFEKAGVQQP. Residues 307–328 form a helical membrane-spanning segment; it reads VYATIGSGIVNTAFTVVSLFVV. Asn-317 contributes to the D-glucose binding site. Topologically, residues 329-334 are cytoplasmic; that stretch reads ERAGRR. The helical transmembrane segment at 335-355 threads the bilayer; the sequence is TLHLIGLAGMAGCAILMTIAL. The Extracellular portion of the chain corresponds to 356-365; the sequence is ALLEQLPWMS. Residues 366-388 traverse the membrane as a helical segment; that stretch reads YLSIVAIFGFVAFFEVGPGPIPW. A D-glucose-binding site is contributed by Glu-380. Trp-388 is a binding site for cytochalasin B. The Cytoplasmic portion of the chain corresponds to 389–401; that stretch reads FIVAELFSQGPRP. A helical transmembrane segment spans residues 402-422; that stretch reads AAIAVAGFSNWTSNFIVGMCF. Asn-411 lines the cytochalasin B pocket. Over 423-429 the chain is Extracellular; it reads QYVEQLC. Residues 430 to 450 form a helical membrane-spanning segment; that stretch reads GPYVFIIFTVLLVLFFIFTYF. Residues 451-492 are Cytoplasmic-facing; it reads KVPETKGRTFDEIASGFRQGGASQSDKTPEELFHPLGADSQV. Phosphoserine is present on Ser-465. Residues 468–492 are disordered; the sequence is RQGGASQSDKTPEELFHPLGADSQV. At Thr-478 the chain carries Phosphothreonine. Ser-490 is subject to Phosphoserine.

The protein belongs to the major facilitator superfamily. Sugar transporter (TC 2.A.1.1) family. Glucose transporter subfamily. In terms of assembly, interacts with GIPC (via PDZ domain). Found in a complex with ADD2, DMTN and SLC2A1. Interacts (via C-terminus cytoplasmic region) with DMTN isoform 2. Interacts with SNX27; the interaction is required when endocytosed to prevent degradation in lysosomes and promote recycling to the plasma membrane. Interacts with STOM. Interacts with SGTA (via Gln-rich region). Interacts with isoform 1 of BSG. Post-translationally, phosphorylation at Ser-226 by PKC promotes glucose uptake by increasing cell membrane localization. Detected in erythrocytes (at protein level). Expressed at variable levels in many human tissues.

The protein localises to the cell membrane. It localises to the melanosome. It is found in the photoreceptor inner segment. It catalyses the reaction D-glucose(out) = D-glucose(in). The protein operates within carbohydrate degradation. With respect to regulation, the uptake of glucose is inhibited by cytochalasin B and Phe-amide core-scaffold inhibitors GLUT-i1 and GLUT-i2. These inhibitors bind in the central cavity of the inward-open state and overlap the glucose-binding site. Glucose uptake is increased in response to phorbol ester 12-O-tetradecanoylphorbol-13-acetate (TPA) treatment: TPA-induced glucose uptake requires phosphorylation at Ser-226. Interacts with SMIM43; the interaction may promote SLC2A1-mediated glucose transport to meet the energy needs of mesendoderm differentiation. In terms of biological role, facilitative glucose transporter, which is responsible for constitutive or basal glucose uptake. Has a very broad substrate specificity; can transport a wide range of aldoses including both pentoses and hexoses. Most important energy carrier of the brain: present at the blood-brain barrier and assures the energy-independent, facilitative transport of glucose into the brain. In association with BSG and NXNL1, promotes retinal cone survival by increasing glucose uptake into photoreceptors. Required for mesendoderm differentiation. The chain is Solute carrier family 2, facilitated glucose transporter member 1 from Homo sapiens (Human).